The following is a 1068-amino-acid chain: Retinoblastoma-like protein 1 (1068 aa).

The residue at position 332 (Thr-332) is a Phosphothreonine; by CDK2. Position 369 is a phosphothreonine; by CDK4 (Thr-369). Residue Thr-385 is modified to Phosphothreonine; by CDK2. The interval 385–584 is domain A; sequence TPVASATQSV…WEALQVSANK (200 aa). Residues 385 to 949 form a pocket; binds T and E1A region; that stretch reads TPVASATQSV…GRVKSFALKY (565 aa). Residues 585–780 are spacer; that stretch reads VPTCEEVIFP…AQEVHSTGIN (196 aa). Ser-640 carries the phosphoserine; by CDK2 and CDK4 modification. 2 positions are modified to phosphoserine: Ser-650 and Ser-749. A Phosphoserine; by CDK2 modification is found at Ser-762. Residues 781-949 form a domain B region; sequence RPKRTGSLAL…GRVKSFALKY (169 aa). Phosphoserine; by CDK2 and CDK4 occurs at positions 964 and 975. The residue at position 988 (Ser-988) is a Phosphoserine; by CDK2. The residue at position 997 (Thr-997) is a Phosphothreonine; by CDK2. Residue Ser-1009 is modified to Phosphoserine; by CDK2. Position 1041 is a phosphoserine (Ser-1041).

It belongs to the retinoblastoma protein (RB) family. Component of the DREAM complex (also named LINC complex) at least composed of E2F4, E2F5, LIN9, LIN37, LIN52, LIN54, MYBL1, MYBL2, RBL1, RBL2, RBBP4, TFDP1 and TFDP2. The complex exists in quiescent cells where it represses cell cycle-dependent genes. It dissociates in S phase when LIN9, LIN37, LIN52 and LIN54 form a subcomplex that binds to MYBL2. Interacts with AATF. Interacts with KDM5A. Interacts with KMT5B and KMT5C. Interacts with USP4. Interacts with RBBP9. In terms of assembly, (Microbial infection) Interacts with SV40 and JC virus large T antigens. Large T antigen, but not E1A, binds only to the unphosphorylated form. As to quaternary structure, (Microbial infection) Interacts with JC virus small t antigen. Post-translationally, cell-cycle arrest properties are inactivated by phosphorylation on Thr-332, Ser-640, Ser-964 and Ser-975 by CDK4.

The protein resides in the nucleus. Functionally, key regulator of entry into cell division. Directly involved in heterochromatin formation by maintaining overall chromatin structure and, in particular, that of constitutive heterochromatin by stabilizing histone methylation. Recruits and targets histone methyltransferases KMT5B and KMT5C, leading to epigenetic transcriptional repression. Controls histone H4 'Lys-20' trimethylation. Probably acts as a transcription repressor by recruiting chromatin-modifying enzymes to promoters. Potent inhibitor of E2F-mediated trans-activation. May act as a tumor suppressor. This is Retinoblastoma-like protein 1 (RBL1) from Homo sapiens (Human).